Here is a 481-residue protein sequence, read N- to C-terminus: Beta-amyrin 28-monooxygenase (481 aa).

A helical transmembrane segment spans residues 4 to 24 (FYVPLLSLFVLFVSLSFYFLF). Cysteine 428 serves as a coordination point for heme.

Belongs to the cytochrome P450 family. It depends on heme as a cofactor.

It is found in the membrane. It catalyses the reaction beta-amyrin + 3 reduced [NADPH--hemoprotein reductase] + 3 O2 = oleanolate + 3 oxidized [NADPH--hemoprotein reductase] + 4 H2O + 4 H(+). Its function is as follows. Catalyzes the oxidation of the methyl group to a carboxyl group at the C-28 position of beta-amyrin to form oleanolate. This chain is Beta-amyrin 28-monooxygenase, found in Kalopanax septemlobus (Castor aralia).